A 140-amino-acid chain; its full sequence is Chorion class A protein Ld2/Ld41 (140 aa).

The signal sequence occupies residues 1 to 21; it reads MNSFAFLLVCIQACLVQSVFS.

It belongs to the chorion protein family.

Its function is as follows. This protein is one of many from the eggshell of the gypsy moth. The chain is Chorion class A protein Ld2/Ld41 from Lymantria dispar (Gypsy moth).